The primary structure comprises 465 residues: Cysteine--tRNA ligase (465 aa).

A Zn(2+)-binding site is contributed by Cys-27. A 'HIGH' region motif is present at residues Pro-29–His-39. The Zn(2+) site is built by Cys-204, His-229, and Glu-233. A 'KMSKS' region motif is present at residues Lys-261 to Ser-265. Residue Lys-264 coordinates ATP.

This sequence belongs to the class-I aminoacyl-tRNA synthetase family. Zn(2+) serves as cofactor.

It is found in the cytoplasm. It catalyses the reaction tRNA(Cys) + L-cysteine + ATP = L-cysteinyl-tRNA(Cys) + AMP + diphosphate. The protein is Cysteine--tRNA ligase of Metallosphaera sedula (strain ATCC 51363 / DSM 5348 / JCM 9185 / NBRC 15509 / TH2).